Consider the following 373-residue polypeptide: sn-glycerol-3-phosphate import ATP-binding protein UgpC (373 aa).

The ABC transporter domain maps to Leu4–Ile235. ATP is bound at residue Gly37–Ser44.

It belongs to the ABC transporter superfamily. sn-glycerol-3-phosphate importer (TC 3.A.1.1.3) family. In terms of assembly, the complex is composed of two ATP-binding proteins (UgpC), two transmembrane proteins (UgpA and UgpE) and a solute-binding protein (UgpB).

It is found in the cell inner membrane. It catalyses the reaction sn-glycerol 3-phosphate(out) + ATP + H2O = sn-glycerol 3-phosphate(in) + ADP + phosphate + H(+). Functionally, part of the ABC transporter complex UgpBAEC involved in sn-glycerol-3-phosphate (G3P) import. Responsible for energy coupling to the transport system. This is sn-glycerol-3-phosphate import ATP-binding protein UgpC from Psychromonas ingrahamii (strain DSM 17664 / CCUG 51855 / 37).